The chain runs to 300 residues: 4-hydroxy-tetrahydrodipicolinate synthase (300 aa).

Pyruvate is bound at residue Thr56. Tyr145 serves as the catalytic Proton donor/acceptor. Lys173 acts as the Schiff-base intermediate with substrate in catalysis. A pyruvate-binding site is contributed by Val215.

The protein belongs to the DapA family. Homotetramer; dimer of dimers.

It localises to the cytoplasm. It carries out the reaction L-aspartate 4-semialdehyde + pyruvate = (2S,4S)-4-hydroxy-2,3,4,5-tetrahydrodipicolinate + H2O + H(+). The protein operates within amino-acid biosynthesis; L-lysine biosynthesis via DAP pathway; (S)-tetrahydrodipicolinate from L-aspartate: step 3/4. Functionally, catalyzes the condensation of (S)-aspartate-beta-semialdehyde [(S)-ASA] and pyruvate to 4-hydroxy-tetrahydrodipicolinate (HTPA). The sequence is that of 4-hydroxy-tetrahydrodipicolinate synthase from Prochlorococcus marinus (strain AS9601).